A 160-amino-acid chain; its full sequence is MPSFDIVSEVEMNEAKNAVDNANRELETRFDFRGVDASIELNDKVIKLKAEADSQVIQLFDILASKISKRGMDVSSLELQDISRAGKNVFRNVGLKQGIEKEMAKKIVKAIKDSKVKVQAAIQGEEVRVTGKKRDDLQEAMQVVRSADLGQPFQFKNFRD.

This sequence belongs to the YajQ family.

Nucleotide-binding protein. In Pseudoalteromonas translucida (strain TAC 125), this protein is Nucleotide-binding protein PSHAa2277.